The following is a 513-amino-acid chain: ATP synthase subunit alpha (513 aa).

An ATP-binding site is contributed by 169-176; that stretch reads GDRQTGKT.

Belongs to the ATPase alpha/beta chains family. As to quaternary structure, F-type ATPases have 2 components, CF(1) - the catalytic core - and CF(0) - the membrane proton channel. CF(1) has five subunits: alpha(3), beta(3), gamma(1), delta(1), epsilon(1). CF(0) has three main subunits: a(1), b(2) and c(9-12). The alpha and beta chains form an alternating ring which encloses part of the gamma chain. CF(1) is attached to CF(0) by a central stalk formed by the gamma and epsilon chains, while a peripheral stalk is formed by the delta and b chains.

It localises to the cell inner membrane. It catalyses the reaction ATP + H2O + 4 H(+)(in) = ADP + phosphate + 5 H(+)(out). In terms of biological role, produces ATP from ADP in the presence of a proton gradient across the membrane. The alpha chain is a regulatory subunit. The protein is ATP synthase subunit alpha of Shewanella oneidensis (strain ATCC 700550 / JCM 31522 / CIP 106686 / LMG 19005 / NCIMB 14063 / MR-1).